The following is a 182-amino-acid chain: Large ribosomal subunit protein uL5 (182 aa).

Belongs to the universal ribosomal protein uL5 family. As to quaternary structure, part of the 50S ribosomal subunit; part of the 5S rRNA/L5/L18/L25 subcomplex. Contacts the 5S rRNA and the P site tRNA. Forms a bridge to the 30S subunit in the 70S ribosome.

Functionally, this is one of the proteins that bind and probably mediate the attachment of the 5S RNA into the large ribosomal subunit, where it forms part of the central protuberance. In the 70S ribosome it contacts protein S13 of the 30S subunit (bridge B1b), connecting the 2 subunits; this bridge is implicated in subunit movement. Contacts the P site tRNA; the 5S rRNA and some of its associated proteins might help stabilize positioning of ribosome-bound tRNAs. In Borreliella afzelii (strain PKo) (Borrelia afzelii), this protein is Large ribosomal subunit protein uL5.